Here is a 261-residue protein sequence, read N- to C-terminus: Zinc finger protein 664 (261 aa).

9 consecutive C2H2-type zinc fingers follow at residues 3–25 (YKCP…QKIH), 31–53 (HKCD…WRDH), 59–81 (YKCD…KKIH), 87–109 (YKCY…MRVH), 115–137 (YVCS…QRVH), 143–165 (FKCE…QRVH), 171–193 (YKCY…QRVH), 199–221 (YRCC…QRVH), and 227–249 (FKCD…QRVH). A Glycyl lysine isopeptide (Lys-Gly) (interchain with G-Cter in SUMO2) cross-link involves residue lysine 257.

The protein belongs to the krueppel C2H2-type zinc-finger protein family.

Its subcellular location is the nucleus. May be involved in transcriptional regulation. The sequence is that of Zinc finger protein 664 from Homo sapiens (Human).